A 171-amino-acid polypeptide reads, in one-letter code: Cardioactive peptide (171 aa).

The first 26 residues, 1–26 (MQMYHVVLGCSLAILLVILDIPQASC), serve as a signal peptide directing secretion. Positions 27 to 49 (DDVVIQKRQVDPAEMDRLLDPKR) are excised as a propeptide. Cys-54 and Cys-60 are oxidised to a cystine. The residue at position 60 (Cys-60) is a Cysteine amide. The propeptide occupies 64-171 (RSDESMGTLV…QEEITKPWSR (108 aa)). The tract at residues 116–171 (QSNQFGAGMDRPLPLPIAGYRRKRFADPESQAPAPHSNLPRATSQLQEEITKPWSR) is disordered.

Central nervous system; most neurons exhibit coexpression with burs.

It is found in the secreted. Its function is as follows. Cardioregulatory neurohormone that increases heart beat rate during adult wing inflation; has no effect on beat amplitude. The effect of CCAP is both ino- and chronotropic. The chain is Cardioactive peptide from Periplaneta americana (American cockroach).